Consider the following 217-residue polypeptide: MGQKVCAHGFRVGPTLIKGWDSVLYAEKHYKTLFIQDLKIRDLINNSFNQAQISRVLIERPSNKSIIININAKKPNVIIGRSGNEIDKLKKAIEKMTYLQEVYINIHEVRKFNIDAAIVAQTIALQLEKRVSFRKAMKTAIQASFKQGGQGIRVSCSGRLGGAEIARTEWYIEGRMPLHTLRADIDYSTAEAITTYGVIGVKVWIYKGEYTANKRYN.

A KH type-2 domain is found at 40 to 110 (IRDLINNSFN…EVYINIHEVR (71 aa)).

Belongs to the universal ribosomal protein uS3 family. In terms of assembly, part of the 30S ribosomal subunit. Forms a tight complex with proteins S10 and S14.

Binds the lower part of the 30S subunit head. Binds mRNA in the 70S ribosome, positioning it for translation. The chain is Small ribosomal subunit protein uS3 from Rickettsia canadensis (strain McKiel).